A 197-amino-acid chain; its full sequence is Lipid A acyltransferase PagP (197 aa).

An N-terminal signal peptide occupies residues Met-1–Ala-24. Catalysis depends on residues His-69, Asp-112, and Ser-113.

The protein belongs to the lipid A palmitoyltransferase family. In terms of assembly, homodimer.

It is found in the cell outer membrane. It carries out the reaction a lipid A + a 1,2-diacyl-sn-glycero-3-phosphocholine = a hepta-acyl lipid A + a 2-acyl-sn-glycero-3-phosphocholine. The enzyme catalyses a lipid IVA + a 1,2-diacyl-sn-glycero-3-phosphocholine = a lipid IVB + a 2-acyl-sn-glycero-3-phosphocholine. It catalyses the reaction a lipid IIA + a 1,2-diacyl-sn-glycero-3-phosphocholine = a lipid IIB + a 2-acyl-sn-glycero-3-phosphocholine. Functionally, transfers a fatty acid residue from the sn-1 position of a phospholipid to the N-linked hydroxyfatty acid chain on the proximal unit of lipid A or its precursors. The protein is Lipid A acyltransferase PagP of Serratia proteamaculans (strain 568).